Consider the following 231-residue polypeptide: Aldehyde decarbonylase (231 aa).

Residues E32, E60, H63, E115, and H147 each contribute to the Fe cation site.

It belongs to the aldehyde decarbonylase family. Requires Binds 2 metal cations per subunit. The catalytic dinuclear metal-binding site could be either a di-iron or a manganese-iron cofactor. as cofactor.

It catalyses the reaction a long-chain fatty aldehyde + 2 NADPH + O2 + H(+) = a long-chain alkane + formate + 2 NADP(+) + H2O. Catalyzes the decarbonylation of fatty aldehydes to alkanes. Requires the presence of ferredoxin, ferredoxin reductase and NADPH for in vitro decarbonylase activity. Involved in the biosynthesis of alkanes, mainly heptadecane and pentadecane. This is Aldehyde decarbonylase from Synechocystis sp. (strain ATCC 27184 / PCC 6803 / Kazusa).